A 147-amino-acid polypeptide reads, in one-letter code: MKTLFLLAILALVASTTFAQYSVGGGYNDVGGGGGSQQCPQERPNLGSCKDYVMERCFTMKDFPLTWPTKWWKGGCEQEVREKCCQQLSQIAPQCRCDAIRGVIQGKLGGIFGIGGGDVFKQIQRAQILPSKCNMGADCKFPSGYYW.

A signal peptide spans 1–19; it reads MKTLFLLAILALVASTTFA. Positions 20–28 are excised as a propeptide; that stretch reads QYSVGGGYN.

Five disulfide bonds are present. In terms of tissue distribution, found in endosperm and aleurone layer of developing kernels, but not in the embryo.

It localises to the membrane. The protein localises to the secreted. It is found in the extracellular space. Acts as a membranotoxin, probably through its antibacterial and antifungal activities, contributing to the defense mechanism of the plant against predators. Forms monovalent cation-selective ion channels in membranes. Contributes to grain texture and hardness. The protein is Hordoindoline-B1 (HINB-1) of Hordeum vulgare (Barley).